We begin with the raw amino-acid sequence, 325 residues long: Siroheme decarboxylase NirDL subunit (325 aa).

This sequence belongs to the Ahb/Nir family. As to quaternary structure, forms a complex composed of NirDL, NirG and NirH. All proteins are required for the total conversion of siroheme to didecarboxysiroheme.

It catalyses the reaction siroheme + 2 H(+) = 12,18-didecarboxysiroheme + 2 CO2. The protein operates within porphyrin-containing compound metabolism. Functionally, involved in heme d1 biosynthesis. Catalyzes the decarboxylation of siroheme into didecarboxysiroheme. This is Siroheme decarboxylase NirDL subunit from Paracoccus denitrificans (strain Pd 1222).